The sequence spans 266 residues: MDTFQVIILALIQGLTEFLPISSSAHLILPAQLLGWEDQGLSFDVAVNTGSLFAVVIYFRHELWAMFKAWIASIVKGQHSDDSKLAWWIILATLPAVFFGFMAKDFIATHLRNTGVIAVTTVVFGLLLWWADKMSRHDLTIYQTGWRKALLIGFAQALALIPGTSRSGATMTAALMLGLSRDAAARFSFLMSVPVSLGAAILVGKDLAESPLPIDYQALTLGTVISFAAAYLCIHYFLKIISRMGMTPFVIYRLALGAVLCGFIFL.

Transmembrane regions (helical) follow at residues Met1–Ile21, Gln39–Phe59, Trp87–Ile107, Thr114–Met134, Ala149–Ala169, Ala183–Val203, Ala218–Leu238, and Met246–Leu266.

Belongs to the UppP family.

The protein localises to the cell inner membrane. The enzyme catalyses di-trans,octa-cis-undecaprenyl diphosphate + H2O = di-trans,octa-cis-undecaprenyl phosphate + phosphate + H(+). In terms of biological role, catalyzes the dephosphorylation of undecaprenyl diphosphate (UPP). Confers resistance to bacitracin. The sequence is that of Undecaprenyl-diphosphatase 1 from Shewanella oneidensis (strain ATCC 700550 / JCM 31522 / CIP 106686 / LMG 19005 / NCIMB 14063 / MR-1).